Consider the following 57-residue polypeptide: Zinc finger protein MJ0458.1 (57 aa).

4 consecutive short sequence motifs (c(P)XCG motif) follow at residues 8–12 (CISCN), 26–30 (CPNCG), 37–41 (CERCR), and 49–53 (CPKCG). Zn(2+)-binding residues include cysteine 26 and cysteine 29. Zn(2+) contacts are provided by cysteine 49 and cysteine 52.

Monomer in solution.

Zinc-binding protein that binds only one zinc ion. The chain is Zinc finger protein MJ0458.1 from Methanocaldococcus jannaschii (strain ATCC 43067 / DSM 2661 / JAL-1 / JCM 10045 / NBRC 100440) (Methanococcus jannaschii).